The sequence spans 447 residues: ATP synthase subunit beta (447 aa).

Residue 147-154 (GGAGVGKT) coordinates ATP.

The protein belongs to the ATPase alpha/beta chains family. F-type ATPases have 2 components, CF(1) - the catalytic core - and CF(0) - the membrane proton channel. CF(1) has five subunits: alpha(3), beta(3), gamma(1), delta(1), epsilon(1). CF(0) has three main subunits: a(1), b(2) and c(9-12). The alpha and beta chains form an alternating ring which encloses part of the gamma chain. CF(1) is attached to CF(0) by a central stalk formed by the gamma and epsilon chains, while a peripheral stalk is formed by the delta and b chains.

The protein resides in the cell membrane. It carries out the reaction ATP + H2O + 4 H(+)(in) = ADP + phosphate + 5 H(+)(out). Its function is as follows. Produces ATP from ADP in the presence of a proton gradient across the membrane. The catalytic sites are hosted primarily by the beta subunits. The sequence is that of ATP synthase subunit beta from Carsonella ruddii (strain PV).